Here is a 335-residue protein sequence, read N- to C-terminus: tRNA N6-adenosine threonylcarbamoyltransferase (335 aa).

H112 and H116 together coordinate Fe cation. Substrate is bound by residues 134–138, D167, G180, and N273; that span reads VVSGG. D301 contacts Fe cation.

This sequence belongs to the KAE1 / TsaD family. The cofactor is Fe(2+).

The protein resides in the cytoplasm. It catalyses the reaction L-threonylcarbamoyladenylate + adenosine(37) in tRNA = N(6)-L-threonylcarbamoyladenosine(37) in tRNA + AMP + H(+). In terms of biological role, required for the formation of a threonylcarbamoyl group on adenosine at position 37 (t(6)A37) in tRNAs that read codons beginning with adenine. Is involved in the transfer of the threonylcarbamoyl moiety of threonylcarbamoyl-AMP (TC-AMP) to the N6 group of A37, together with TsaE and TsaB. TsaD likely plays a direct catalytic role in this reaction. In Shouchella clausii (strain KSM-K16) (Alkalihalobacillus clausii), this protein is tRNA N6-adenosine threonylcarbamoyltransferase.